Here is a 452-residue protein sequence, read N- to C-terminus: Trigger factor (452 aa).

The PPIase FKBP-type domain maps to 171-256 (GDRVKVNFKG…ATAIETPEEK (86 aa)).

The protein belongs to the FKBP-type PPIase family. Tig subfamily.

The protein resides in the cytoplasm. It carries out the reaction [protein]-peptidylproline (omega=180) = [protein]-peptidylproline (omega=0). In terms of biological role, involved in protein export. Acts as a chaperone by maintaining the newly synthesized protein in an open conformation. Functions as a peptidyl-prolyl cis-trans isomerase. In Bradyrhizobium sp. (strain BTAi1 / ATCC BAA-1182), this protein is Trigger factor.